Here is a 268-residue protein sequence, read N- to C-terminus: Serine/arginine-rich splicing factor SR30 (268 aa).

2 consecutive RRM domains span residues 7 to 82 and 109 to 187; these read RTIY…IAHG and YRVL…EYES. A compositionally biased stretch (basic and acidic residues) spans 186 to 199; that stretch reads ESRSVSRSPDDSKS. Positions 186 to 268 are disordered; it reads ESRSVSRSPD…NSPVSPVISG (83 aa). Phosphoserine occurs at positions 193, 210, 212, 214, 219, 221, 227, 236, 246, 256, and 260. Low complexity predominate over residues 207-247; the sequence is RGPSCSYSSKSRSVSPARSISPRSRPLSRSRSLYSSVSRSQ. The segment covering 257–268 has biased composition (low complexity); sequence RSNSPVSPVISG.

It belongs to the splicing factor SR family. SR subfamily. As to quaternary structure, component of the spliceosome. Interacts with SNRNP35, CYP59 and CYP63. In terms of processing, phosphorylated. As to expression, ubiquitous.

The protein resides in the nucleus speckle. It localises to the nucleus. Its subcellular location is the nucleoplasm. It is found in the cytoplasm. Its function is as follows. Regulatory splicing factor that modulates alternative splicing and gene expression in specific cell types. Autoregulates its own expression. Probably involved in intron recognition and spliceosome assembly. In Arabidopsis thaliana (Mouse-ear cress), this protein is Serine/arginine-rich splicing factor SR30 (SR30).